Here is a 109-residue protein sequence, read N- to C-terminus: Cell cycle protein GpsB (109 aa).

A coiled-coil region spans residues 36-63 (IKDYETYAALVKSLRQEIADLKEELTRK).

The protein belongs to the GpsB family. Forms polymers through the coiled coil domains. Interacts with PBP1, MreC and EzrA.

The protein resides in the cytoplasm. Divisome component that associates with the complex late in its assembly, after the Z-ring is formed, and is dependent on DivIC and PBP2B for its recruitment to the divisome. Together with EzrA, is a key component of the system that regulates PBP1 localization during cell cycle progression. Its main role could be the removal of PBP1 from the cell pole after pole maturation is completed. Also contributes to the recruitment of PBP1 to the division complex. Not essential for septum formation. This Streptococcus pneumoniae serotype 4 (strain ATCC BAA-334 / TIGR4) protein is Cell cycle protein GpsB.